The following is a 2962-amino-acid chain: Sex determination and dosage compensation protein sdc-2 (2962 aa).

2 disordered regions span residues 1–28 (MSDE…ADPD) and 1061–1110 (DKRS…QVDP). Over residues 15–27 (SFNESDSPDEADP) the composition is skewed to acidic residues. Coiled coils occupy residues 995 to 1085 (LESA…LADK) and 1140 to 1268 (REER…KRVS). Disordered regions lie at residues 1535 to 1554 (PASL…GSPV) and 2198 to 2227 (LDSS…NQLD). The segment covering 2212-2225 (FEDSPSEDENDENQ) has biased composition (acidic residues).

Component of the SDC complex, which consists of sdc-1, sdc-2 and sdc-3. Within the complex, interacts with sdc-1 and sdc-3. Expressed in hermaphrodites (XX), but absent in males (XO) (at protein level).

The protein localises to the chromosome. In terms of biological role, component of the SDC complex that functions in sex determination and in X chromosome dosage compensation specifically in hermaphrodite (XX) animals. Required for the recruitment of the condensin I-like dosage compensation complex to the male sex-determining autosomal gene her-1, thereby contributing to its repression and initiating hermaphrodite sexual development. Plays a central role in X-chromosome recognition and in the recruitment and assembly of the dosage compensation complex and the dosage compensation protein dpy-21 onto the X chromosomes in hermaphrodites, which leads to a reduction of X-linked gene transcription and an equalization of X-linked gene expression between the sexes. May confer protection against toxicity induced by heavy metals such as arsenite. The sequence is that of Sex determination and dosage compensation protein sdc-2 from Caenorhabditis elegans.